The chain runs to 76 residues: Kappa-actitoxin-Avd4n (76 aa).

A signal peptide spans 1–19 (MNKAFFLCLVVLCAAVVFA). The propeptide occupies 20-31 (AEDLQKGKHAPF). Disulfide bonds link C37–C72 and C39–C65.

It belongs to the sea anemone type 3 (BDS) potassium channel toxin family. In terms of processing, lacks the conventional Cys residue at position 55. Thus, only 2 disulfide are possible present. In terms of tissue distribution, experimental results show no expression in the ectodermal tissue from the distal and proximal tentacles, body wall, and oral disk. Since paralogs are expressed in this tissue, an expression of this toxin in this tissue is probable. The negative results could be explained by the very low abundance of EST sequences.

Its subcellular location is the secreted. The protein localises to the nematocyst. Its function is as follows. Blocks Kv3 voltage-gated potassium channels. Reduces blood pressure. This chain is Kappa-actitoxin-Avd4n, found in Anemonia viridis (Snakelocks anemone).